Consider the following 308-residue polypeptide: Bifunctional protein FolD (308 aa).

NADP(+) is bound by residues 171 to 173, Ser198, and Ile239; that span reads GRS.

It belongs to the tetrahydrofolate dehydrogenase/cyclohydrolase family. Homodimer.

The catalysed reaction is (6R)-5,10-methylene-5,6,7,8-tetrahydrofolate + NADP(+) = (6R)-5,10-methenyltetrahydrofolate + NADPH. It carries out the reaction (6R)-5,10-methenyltetrahydrofolate + H2O = (6R)-10-formyltetrahydrofolate + H(+). Its pathway is one-carbon metabolism; tetrahydrofolate interconversion. In terms of biological role, catalyzes the oxidation of 5,10-methylenetetrahydrofolate to 5,10-methenyltetrahydrofolate and then the hydrolysis of 5,10-methenyltetrahydrofolate to 10-formyltetrahydrofolate. The sequence is that of Bifunctional protein FolD from Borreliella burgdorferi (strain ATCC 35210 / DSM 4680 / CIP 102532 / B31) (Borrelia burgdorferi).